A 1138-amino-acid polypeptide reads, in one-letter code: Protein RECOGNITION OF PERONOSPORA PARASITICA 7 (1138 aa).

The NB-ARC domain maps to 166-422; that stretch reads EENVKKLVGY…CNYVLSLSFE (257 aa). Residue 189 to 196 coordinates ATP; it reads GMGGLGKT. LRR repeat units follow at residues 544–565, 566–581, 582–606, 607–631, 655–680, 681–705, 707–726, 727–752, 754–774, 775–797, 798–825, 847–871, 873–893, 894–918, 940–963, 1028–1050, 1055–1078, 1079–1103, and 1115–1138; these read QYPTTLHVEKDINNPKLRSLVV, VTLGSWNMAGSSFTRL, ELLRVLDLVQAKLKGGKLASCIGKL, IHLRYLSLEYAEVTHIPYSLGNLKL, MQELRYLALPSLIERKTKLELSNLVK, LETLENFSTKNSSLEDLRGMVRLRT, TIELIEETSLETLAASIGGL, KYLEKLEIDDLGSKMRTKEAGIVFDF, HLKRLRLELYMPRLSKEQHFP, SHLTTLYLQHCRLEEDPMPILEK, LLQLKELELGHKSFSGKKMVCSSCGFPQ, MPLLLTLNIFDCRKLKQLPDEHLPS, LTAISLKKCGLEDPIPTLERL, VHLKELSLSELCGRIMVCTGGGFPQ, MPRLHTLEIRRCLKLKKLPNGFPQ, LEKLLHLKNVSLFQSFSGKRMVC, FPQLQKLSIREIEWEEWIVEQGSM, PLLHTLYIGVCPNLKELPDGLRFIY, and KKRLSEGGEDYYKVQHIPSVEFDD.

The protein belongs to the disease resistance NB-LRR family.

Disease resistance protein required for incompatible interactions with avirulent strains of Hyaloperonospora arabidopsidis (downy mildew), isolate Hpa-Hiks1 in cv. Columbia. The chain is Protein RECOGNITION OF PERONOSPORA PARASITICA 7 from Arabidopsis thaliana (Mouse-ear cress).